The following is a 400-amino-acid chain: Queuine tRNA-ribosyltransferase catalytic subunit (400 aa).

The active-site Proton acceptor is aspartate 89. Substrate is bound by residues 89–93 (DSGGF), aspartate 143, glutamine 185, and glycine 212. Positions 243–249 (GVGFPVD) are RNA binding. Aspartate 262 serves as the catalytic Nucleophile. Residues 267-271 (TRTAR) form an RNA binding; important for wobble base 34 recognition region. Zn(2+)-binding residues include cysteine 301, cysteine 303, cysteine 306, and histidine 331.

Belongs to the queuine tRNA-ribosyltransferase family. Heterodimer of a catalytic subunit and an accessory subunit. Requires Zn(2+) as cofactor.

It is found in the cytoplasm. It catalyses the reaction guanosine(34) in tRNA + queuine = queuosine(34) in tRNA + guanine. Functionally, catalytic subunit of the queuine tRNA-ribosyltransferase (TGT) that catalyzes the base-exchange of a guanine (G) residue with queuine (Q) at position 34 (anticodon wobble position) in tRNAs with GU(N) anticodons (tRNA-Asp, -Asn, -His and -Tyr), resulting in the hypermodified nucleoside queuosine (7-(((4,5-cis-dihydroxy-2-cyclopenten-1-yl)amino)methyl)-7-deazaguanosine). Catalysis occurs through a double-displacement mechanism. The nucleophile active site attacks the C1' of nucleotide 34 to detach the guanine base from the RNA, forming a covalent enzyme-RNA intermediate. The proton acceptor active site deprotonates the incoming queuine, allowing a nucleophilic attack on the C1' of the ribose to form the product. In Caenorhabditis briggsae, this protein is Queuine tRNA-ribosyltransferase catalytic subunit.